We begin with the raw amino-acid sequence, 60 residues long: Large ribosomal subunit protein bL32 (60 aa).

The protein belongs to the bacterial ribosomal protein bL32 family.

The polypeptide is Large ribosomal subunit protein bL32 (Borrelia turicatae (strain 91E135)).